We begin with the raw amino-acid sequence, 121 residues long: Large ribosomal subunit protein bL12 (121 aa).

This sequence belongs to the bacterial ribosomal protein bL12 family. In terms of assembly, homodimer. Part of the ribosomal stalk of the 50S ribosomal subunit. Forms a multimeric L10(L12)X complex, where L10 forms an elongated spine to which 2 to 4 L12 dimers bind in a sequential fashion. Binds GTP-bound translation factors.

Forms part of the ribosomal stalk which helps the ribosome interact with GTP-bound translation factors. Is thus essential for accurate translation. The protein is Large ribosomal subunit protein bL12 of Shewanella baltica (strain OS223).